Consider the following 29-residue polypeptide: Cyclotide mden-B (29 aa).

A cross-link (cyclopeptide (Gly-Asn)) is located at residues 1–29; that stretch reads GLPICGETCFTGKCYTPGCTCSYPICKKN. Disulfide bonds link Cys-5–Cys-19, Cys-9–Cys-21, and Cys-14–Cys-26.

This sequence belongs to the cyclotide family. Moebius subfamily. Post-translationally, this is a cyclic peptide.

Probably participates in a plant defense mechanism. The protein is Cyclotide mden-B of Melicytus dentatus (Tree violet).